Reading from the N-terminus, the 423-residue chain is MGCLRPIYVLFFCFVVRVYGQYEAYQWDEDYEQEPSEDYEPEFQFHQNIEYGAPFYQNILGCAKECFCPTNFPTSMYCDNRKLKTIPDIPMHIQQLNLQFNDIEAVTADSFINATHLKEINLSHNKIKSQKIDYGVFAKLSNLQQLHLDHNNLEEFPFPLPKSLERLLLGYNEISTLPTHAMDGLVNVTMLDLCYNHLSDSTLKGKILSKLEKLMQLNLCNNRLESMPPGLPLSLMYLSLENNSISSIPEDYFQKLPKLHALRISHNKLEDIPYDIFNLSNLIELNVGHNKLKQAFYIPRNLEHLYLQNNEIQSINVTMMCPSLDPLHHHHLTYLRVDQNKLKEPISSYIFFCFPRIHSIYYGEQRSTNGETIQLKTQVFRRYQDEEEEEEDDSQDHTLEGQEETEEHFNSHYYEMQAWQNTI.

An N-terminal signal peptide occupies residues Met1–Gly20. A sulfotyrosine mark is found at Tyr22, Tyr25, Tyr31, Tyr39, Tyr51, and Tyr77. Positions Ala53–Met91 constitute an LRRNT domain. LRR repeat units lie at residues His92–Asn113, His116–Ser129, Asn142–Leu164, Glu165–Gly184, Asn187–Ile207, Lys213–Leu233, Ser234–Lys255, Lys258–Leu279, Asn281–Gln294, Asn301–Pro322, and His331–Cys353. N-linked (GlcNAc...) asparagine glycans are attached at residues Asn113 and Asn121. The N-linked (GlcNAc...) asparagine glycan is linked to Asn187. N-linked (GlcNAc...) asparagine glycosylation is found at Asn242 and Asn278. Residue Asn316 is glycosylated (N-linked (GlcNAc...) asparagine). Cysteines 321 and 353 form a disulfide. The interval Tyr383 to His408 is disordered. The segment covering Asp385–Ser394 has biased composition (acidic residues). A sulfotyrosine mark is found at Tyr413 and Tyr414.

It belongs to the small leucine-rich proteoglycan (SLRP) family. SLRP class II subfamily. Binds the alpha(V)beta(3)-integrin. Glycosylated; contains keratan sulfate. As to expression, osteoblast and odontoblast. Expressed in femoral bone and calvaria tissues. Detected in femoral head, rib, tendon and bone marrow.

The protein localises to the secreted. It is found in the extracellular space. It localises to the extracellular matrix. May be implicated in biomineralization processes. Has a function in binding of osteoblasts via the alpha(V)beta(3)-integrin. The polypeptide is Osteomodulin (Omd) (Rattus norvegicus (Rat)).